We begin with the raw amino-acid sequence, 349 residues long: Glycerol-3-phosphate dehydrogenase [NAD(P)+] (349 aa).

NADPH is bound by residues tryptophan 20, arginine 43, arginine 44, and lysine 117. The sn-glycerol 3-phosphate site is built by lysine 117 and glycine 147. Residue alanine 151 coordinates NADPH. Residues lysine 202, aspartate 255, serine 265, arginine 266, and asparagine 267 each coordinate sn-glycerol 3-phosphate. Lysine 202 (proton acceptor) is an active-site residue. Residue arginine 266 participates in NADPH binding. Residues valine 297 and glutamate 299 each contribute to the NADPH site.

This sequence belongs to the NAD-dependent glycerol-3-phosphate dehydrogenase family.

Its subcellular location is the cytoplasm. It catalyses the reaction sn-glycerol 3-phosphate + NAD(+) = dihydroxyacetone phosphate + NADH + H(+). The enzyme catalyses sn-glycerol 3-phosphate + NADP(+) = dihydroxyacetone phosphate + NADPH + H(+). Its pathway is membrane lipid metabolism; glycerophospholipid metabolism. Functionally, catalyzes the reduction of the glycolytic intermediate dihydroxyacetone phosphate (DHAP) to sn-glycerol 3-phosphate (G3P), the key precursor for phospholipid synthesis. The protein is Glycerol-3-phosphate dehydrogenase [NAD(P)+] of Mycobacterium leprae (strain TN).